A 2387-amino-acid chain; its full sequence is Highly reducing polyketide synthase curS1 (2387 aa).

The region spanning 10–433 is the Ketosynthase family 3 (KS3) domain; sequence DVPIAVVGLS…GTNGHVVLES (424 aa). Active-site for beta-ketoacyl synthase activity residues include cysteine 182, histidine 316, and histidine 356. The segment at 551–891 is malonyl-CoA:ACP transacylase (MAT) domain; it reads FVFTGQGAQW…ELASELFLKG (341 aa). Serine 641 serves as the catalytic For malonyltransferase activity. The interval 940-1075 is N-terminal hotdog fold; the sequence is KSIIGAQVPM…GLITIDYAET (136 aa). One can recognise a PKS/mFAS DH domain in the interval 940 to 1259; sequence KSIIGAQVPM…VSELENDSGE (320 aa). The dehydratase (DH) domain stretch occupies residues 942-1256; the sequence is IIGAQVPMMD…DYRVSELEND (315 aa). Histidine 972 (proton acceptor; for dehydratase activity) is an active-site residue. Residues 1103 to 1259 form a C-terminal hotdog fold region; the sequence is SYTYSKEDFY…VSELENDSGE (157 aa). The Proton donor; for dehydratase activity role is filled by aspartate 1169. Residues 1673 to 1987 are enoylreductase (ER) domain; it reads GLMDTLTFIE…QGKHRGKLVL (315 aa). The catalytic ketoreductase (KRc) domain stretch occupies residues 2011-2191; that stretch reads STYLFIGGLG…VAVDLGIMRD (181 aa). The 78-residue stretch at 2302 to 2379 folds into the Carrier domain; sequence EAVVIITDAL…VFAGKIAEKS (78 aa). Position 2339 is an O-(pantetheine 4'-phosphoryl)serine (serine 2339).

It participates in mycotoxin biosynthesis. Functionally, highly reducing polyketide synthase; part of the gene cluster that mediates the biosynthesis of 10,11-dehydrocurvularin, a prevalent fungal phytotoxin with heat shock response and immune-modulatory activities. The highly reducing polyketide synthase curS1 is responsible for biosynthesis up to the tetraketide stage. The non-reducing polyketide synthase curS2 then conducts four additional chain extension cycles, producing the unreduced part of the nascent octaketide from C-1 to C-8 in 10,11-dehydrocurvularin. This Aspergillus terreus protein is Highly reducing polyketide synthase curS1.